Reading from the N-terminus, the 115-residue chain is DNA-binding protein TV0008 (115 aa).

Positions Leu18–Ile37 are disordered.

The protein belongs to the PDCD5 family.

This Thermoplasma volcanium (strain ATCC 51530 / DSM 4299 / JCM 9571 / NBRC 15438 / GSS1) protein is DNA-binding protein TV0008.